The primary structure comprises 192 residues: Fe/S biogenesis protein NfuA (192 aa).

[4Fe-4S] cluster contacts are provided by Cys149 and Cys152.

This sequence belongs to the NfuA family. In terms of assembly, homodimer. [4Fe-4S] cluster serves as cofactor.

Functionally, involved in iron-sulfur cluster biogenesis. Binds a 4Fe-4S cluster, can transfer this cluster to apoproteins, and thereby intervenes in the maturation of Fe/S proteins. Could also act as a scaffold/chaperone for damaged Fe/S proteins. In Aeromonas hydrophila subsp. hydrophila (strain ATCC 7966 / DSM 30187 / BCRC 13018 / CCUG 14551 / JCM 1027 / KCTC 2358 / NCIMB 9240 / NCTC 8049), this protein is Fe/S biogenesis protein NfuA.